A 605-amino-acid polypeptide reads, in one-letter code: Pescadillo homolog (605 aa).

The segment at 51 to 484 (KANKGSTAPT…GEEEESESES (434 aa)) is sufficient for interaction with ERB1. S288 is subject to Phosphoserine. Residues 294-342 (LKSALNADEANTDETEKEEEQEKKQEKEQEKEQNEETELDTFEDNNKNK) are a coiled coil. Positions 297–342 (ALNADEANTDETEKEEEQEKKQEKEQEKEQNEETELDTFEDNNKNK) are disordered. The span at 303–312 (ANTDETEKEE) shows a compositional bias: acidic residues. T308 is subject to Phosphothreonine. Positions 313–327 (EQEKKQEKEQEKEQN) are enriched in basic and acidic residues. Residues 355 to 449 (PVASLFSAFV…ELVPANKYLP (95 aa)) form the BRCT domain. A disordered region spans residues 459-605 (PWGDAIGYDP…AKLNKLDSKK (147 aa)). A compositionally biased stretch (acidic residues) spans 473–510 (EEGEEEESESESESEDQVEEEDQEVVAGEEDDDDDEEL). Residues 530-605 (EADKDVNKSK…AKLNKLDSKK (76 aa)) are a coiled coil. The span at 562–571 (KQKKLYKKMK) shows a compositional bias: basic residues. Positions 575–584 (AKKEEQAENL) are enriched in basic and acidic residues. Over residues 585–598 (KKKKKQIAKQKAKL) the composition is skewed to basic residues.

The protein belongs to the pescadillo family. In terms of assembly, component of the NOP7 complex, composed of ERB1, NOP7 and YTM1. The complex is held together by ERB1, which interacts with NOP7 via its N-terminal domain and with YTM1 via a high-affinity interaction between the seven-bladed beta-propeller domains of the 2 proteins. The NOP7 complex associates with the 66S pre-ribosome.

The protein resides in the nucleus. It localises to the nucleolus. It is found in the nucleoplasm. Component of the NOP7 complex, which is required for maturation of the 25S and 5.8S ribosomal RNAs and formation of the 60S ribosome. This Saccharomyces cerevisiae (strain YJM789) (Baker's yeast) protein is Pescadillo homolog.